Here is a 589-residue protein sequence, read N- to C-terminus: EZH inhibitory protein (589 aa).

3 disordered regions span residues 1–46, 61–548, and 561–589; these read MASS…LRLR, AGED…SGPN, and LDSS…KCRG. Composition is skewed to gly residues over residues 29–38 and 105–114; these read GPRGRGGPSG and PKGGGKADQG. The span at 147 to 161 shows a compositional bias: low complexity; that stretch reads GAAGPPLPGARGSPA. Over residues 193–204 the composition is skewed to polar residues; it reads LRSSTSQGSGST. 4 stretches are compositionally biased toward low complexity: residues 299–308, 325–334, 351–360, and 374–390; these read RSSASAVSPE, RSSASVVSPE, and PRAT…TTRS. The residue at position 306 (Ser306) is a Phosphoserine. A compositionally biased stretch (basic and acidic residues) spans 426 to 437; it reads MRLDLQVDREPE. Over residues 438 to 449 the composition is skewed to acidic residues; the sequence is SEAEQEEQELES. The span at 450–465 shows a compositional bias: low complexity; that stretch reads EPGPSSRPQASRSSSR. A sufficient for interaction with EZH2 region spans residues 482–490; that stretch reads RRPVRMRAS. The necessary and sufficient for inhibition of PRC2/EED-EZH1 and PRC2/EED-EZH2 complex activity stretch occupies residues 484–503; it reads PVRMRASSPSPPGRLYPLPK. Low complexity predominate over residues 509–547; that stretch reads VHSPSSSSSESSSVSSSHSPLNKAPDPGSSPPLSSLSGP. A compositionally biased stretch (basic and acidic residues) spans 575-589; the sequence is AAPHTREEEDKKCRG.

Interacts with PRC2/EED-EZH1 complex member EZH1 and with PRC2/EED-EZH2 complex member EZH2; the interaction blocks EZH1/EZH2 methyltransferase activity. Interacts (via C-terminus) with SUZ12 which is a member of the PRC2/EED-EZH1 and PRC2/EED-EZH2 complexes. Highly expressed in ovary with lower expression in testis and very low levels in other tissues tested including prostate, brain, kidney, spleen and liver. During spermatogenesis, expressed mainly in spermatogonia with very low expression in spermatocytes I and II.

Its subcellular location is the nucleus. The protein localises to the cytoplasm. Functionally, inhibits PRC2/EED-EZH1 and PRC2/EED-EZH2 complex function by inhibiting EZH1/EZH2 methyltransferase activity, thereby causing down-regulation of histone H3 trimethylation at 'Lys-27' (H3K27me3). Probably inhibits methyltransferase activity by limiting the stimulatory effect of cofactors such as AEBP2 and JARID2. Inhibits H3K27me3 deposition during spermatogenesis and oogenesis. The polypeptide is EZH inhibitory protein (Mus musculus (Mouse)).